The chain runs to 226 residues: Phosphoglycolate phosphatase (226 aa).

Asp-8 acts as the Nucleophile in catalysis. The Mg(2+) site is built by Asp-8 and Asp-10. Lys-152 contacts substrate. Mg(2+) contacts are provided by Asp-175 and Asp-179.

This sequence belongs to the archaeal SPP-like hydrolase family. Mg(2+) serves as cofactor.

The catalysed reaction is 2-phosphoglycolate + H2O = glycolate + phosphate. Its function is as follows. Catalyzes the dephosphorylation of 2-phosphoglycolate. The sequence is that of Phosphoglycolate phosphatase from Natronomonas pharaonis (strain ATCC 35678 / DSM 2160 / CIP 103997 / JCM 8858 / NBRC 14720 / NCIMB 2260 / Gabara) (Halobacterium pharaonis).